We begin with the raw amino-acid sequence, 1383 residues long: DNA-directed RNA polymerase subunit beta'' (1383 aa).

Residues Cys220, Cys289, Cys296, and Cys299 each coordinate Zn(2+).

The protein belongs to the RNA polymerase beta' chain family. RpoC2 subfamily. In terms of assembly, in plastids the minimal PEP RNA polymerase catalytic core is composed of four subunits: alpha, beta, beta', and beta''. When a (nuclear-encoded) sigma factor is associated with the core the holoenzyme is formed, which can initiate transcription. The cofactor is Zn(2+).

The protein localises to the plastid. Its subcellular location is the chloroplast. It catalyses the reaction RNA(n) + a ribonucleoside 5'-triphosphate = RNA(n+1) + diphosphate. Its function is as follows. DNA-dependent RNA polymerase catalyzes the transcription of DNA into RNA using the four ribonucleoside triphosphates as substrates. This Oenothera elata subsp. hookeri (Hooker's evening primrose) protein is DNA-directed RNA polymerase subunit beta''.